The sequence spans 425 residues: Cytokine receptor-like factor 1 (425 aa).

A signal peptide spans 1–33 (MPAGRPGPVAQSARRPPRPLSSLWSPLLLCVLG). The Ig-like C2-type domain occupies 35–134 (PRGGSGAHTA…SILAGSCLYV (100 aa)). N-linked (GlcNAc...) asparagine glycans are attached at residues Asn95, Asn107, and Asn143. 2 Fibronectin type-III domains span residues 140-235 (KPFN…VLDV) and 240-344 (PPPD…TPRS). A disulfide bridge connects residues Cys146 and Cys156. Residue Asn171 is glycosylated (N-linked (GlcNAc...) asparagine). The cysteines at positions 187 and 198 are disulfide-linked. Ser222 carries the post-translational modification Phosphoserine. Asn295 is a glycosylation site (N-linked (GlcNAc...) asparagine). Residues 330 to 334 (WSEWS) carry the WSXWS motif motif. The interval 335-366 (HPTAASTPRSERPGPGGGVCEPRGGEPSSGPV) is disordered. Residue Asn385 is glycosylated (N-linked (GlcNAc...) asparagine). The disordered stretch occupies residues 402 to 425 (HKTRNQDEGILPSGRRGAARGPAG). Positions 415 to 425 (GRRGAARGPAG) are enriched in low complexity.

Belongs to the type I cytokine receptor family. Type 3 subfamily. In terms of assembly, forms covalent di- and tetramers. Forms a heteromeric complex with cardiotrophin-like cytokine CLCF1/CLC; the CRLF1-CLCF1 complex is a ligand for the ciliary neurotrophic factor receptor/CNTFR. The CRLF1-CLCF1 heterodimer, as well as tripartite signaling complex formed by CRLF1, CLCF1 and CNTFR bind SORL1 (via N-terminal ectodomain); within this complex, the interaction is mediated predominantly by the CRLF1 moiety. Widely expressed in the embryo. Not detected in the brain of adult mice.

Its subcellular location is the secreted. In complex with CLCF1, forms a heterodimeric neurotropic cytokine that plays a crucial role during neuronal development. Plays a role in the initiation and/or maintenance of suckling in neonatal mice. May also play a regulatory role in the immune system. The chain is Cytokine receptor-like factor 1 (Crlf1) from Mus musculus (Mouse).